Consider the following 551-residue polypeptide: GMP synthase [glutamine-hydrolyzing] (551 aa).

The disordered stretch occupies residues 1–28; it reads MTSSPTAAARTEGEAAPTVPTQVESGTA. Residues 19 to 28 show a composition bias toward polar residues; that stretch reads VPTQVESGTA. The region spanning 37 to 227 is the Glutamine amidotransferase type-1 domain; that stretch reads MVAILDFGSQ…VYHICGCEPE (191 aa). Cysteine 114 (nucleophile) is an active-site residue. Catalysis depends on residues histidine 201 and glutamate 203. In terms of domain architecture, GMPS ATP-PPase spans 228 to 426; it reads WTTAAFIEEA…LGLPEEIVQR (199 aa). 255–261 serves as a coordination point for ATP; that stretch reads SGGVDSS.

In terms of assembly, homodimer.

The catalysed reaction is XMP + L-glutamine + ATP + H2O = GMP + L-glutamate + AMP + diphosphate + 2 H(+). It participates in purine metabolism; GMP biosynthesis; GMP from XMP (L-Gln route): step 1/1. Catalyzes the synthesis of GMP from XMP. This Gloeobacter violaceus (strain ATCC 29082 / PCC 7421) protein is GMP synthase [glutamine-hydrolyzing].